The primary structure comprises 790 residues: Phenylalanine--tRNA ligase beta subunit (790 aa).

A tRNA-binding domain is found at 40-149 (AEKVSGVVVG…IDAPVGTDIN (110 aa)). The region spanning 402–479 (NKQIKINLSI…RIYGYSKLPE (78 aa)) is the B5 domain. Mg(2+) contacts are provided by aspartate 457, aspartate 463, glutamate 466, and glutamate 467. The 92-residue stretch at 698–789 (SKYPSVSRDI…LKTKFNIEQR (92 aa)) folds into the FDX-ACB domain.

It belongs to the phenylalanyl-tRNA synthetase beta subunit family. Type 1 subfamily. In terms of assembly, tetramer of two alpha and two beta subunits. Requires Mg(2+) as cofactor.

The protein localises to the cytoplasm. It catalyses the reaction tRNA(Phe) + L-phenylalanine + ATP = L-phenylalanyl-tRNA(Phe) + AMP + diphosphate + H(+). This is Phenylalanine--tRNA ligase beta subunit from Francisella tularensis subsp. tularensis (strain SCHU S4 / Schu 4).